The sequence spans 88 residues: Protein Aeq5-like1 (88 aa).

The N-terminal stretch at 1 to 20 is a signal peptide; the sequence is MKSVIAVLVLSLVLVNFTQA. Cystine bridges form between C29-C68, C33-C64, C40-C56, and C47-C53.

In terms of tissue distribution, is expressed in the ectodermal cells of gastrulae and planulae. Is also noticeable in the endoderm in late planulae. In the primary polyps, is expressed in both ectoderm (sensory neurons) and endoderm (ganglions). Is not expressed in nematocytes.

In terms of biological role, probable neuropeptide. In Nematostella vectensis (Starlet sea anemone), this protein is Protein Aeq5-like1.